We begin with the raw amino-acid sequence, 1127 residues long: Caprin-2 (1127 aa).

A disordered region spans residues 67–108 (YQSPSGHSEEEREGNMKSAKPQVNHSQHGESQRALSPLQSTL). Residues 99 to 108 (RALSPLQSTL) are compositionally biased toward polar residues. Coiled coils occupy residues 129 to 156 (LKHK…GEHL) and 194 to 216 (AQKK…KLRT). Disordered regions lie at residues 382 to 614 (NKQG…KDPV), 642 to 753 (DKPS…SSSV), and 922 to 975 (QCYK…PVDV). 2 stretches are compositionally biased toward basic and acidic residues: residues 402 to 432 (KRWD…HQEV) and 440 to 464 (EQRK…EISK). 2 stretches are compositionally biased toward polar residues: residues 512 to 531 (PKSW…SWTT) and 544 to 567 (TPKS…QISP). A compositionally biased stretch (basic and acidic residues) spans 588–597 (LNTEPKDVPK). Polar residues-rich tracts occupy residues 665 to 714 (KEQN…TSET) and 741 to 753 (QGFQ…SSSV). Ser-948 and Ser-949 each carry phosphoserine. Polar residues predominate over residues 956-970 (TFNSGDSGQGDSRSM). A C1q domain is found at 993-1127 (PQQMRVAFSA…TFSGYLLYQD (135 aa)). Ca(2+) is bound by residues Asp-1078 and Glu-1084.

The protein belongs to the caprin family. In terms of assembly, homotrimer; via C1q domain. Found in a complex with LRP6, CCNY and CDK14 during G2/M stage; CAPRIN2 functions as a scaffold for the complex by binding to CCNY via its N terminus and to CDK14 via its C terminus. Interacts with LRP5. Interacts with LRP6. In terms of tissue distribution, detected in all tissues tested with highest levels of expression in brain and spleen.

It is found in the cytoplasm. Its subcellular location is the mitochondrion. It localises to the cell membrane. Its function is as follows. Promotes phosphorylation of the Wnt coreceptor LRP6, leading to increased activity of the canonical Wnt signaling pathway. Facilitates constitutive LRP6 phosphorylation by CDK14/CCNY during G2/M stage of the cell cycle, which may potentiate cells for Wnt signaling. May regulate the transport and translation of mRNAs, modulating for instance the expression of proteins involved in synaptic plasticity in neurons. Involved in regulation of growth as erythroblasts shift from a highly proliferative state towards their terminal phase of differentiation. May be involved in apoptosis. This is Caprin-2 from Homo sapiens (Human).